A 241-amino-acid polypeptide reads, in one-letter code: Acyl-protein thioesterase 1 (241 aa).

Active-site charge relay system residues include Ser122, Asp178, and His211.

This sequence belongs to the AB hydrolase superfamily. AB hydrolase 2 family.

The protein resides in the cytoplasm. Its subcellular location is the nucleus. The catalysed reaction is S-hexadecanoyl-L-cysteinyl-[protein] + H2O = L-cysteinyl-[protein] + hexadecanoate + H(+). Functionally, hydrolyzes fatty acids from S-acylated cysteine residues in proteins with a strong preference for palmitoylated G-alpha proteins over other acyl substrates. Mediates the deacylation of G-alpha proteins such as GPA1 in vivo, but has weak or no activity toward palmitoylated Ras proteins. Has weak lysophospholipase activity in vitro; however such activity may not exist in vivo. The sequence is that of Acyl-protein thioesterase 1 from Aspergillus fumigatus (strain ATCC MYA-4609 / CBS 101355 / FGSC A1100 / Af293) (Neosartorya fumigata).